The sequence spans 342 residues: Nicotinate-nucleotide--dimethylbenzimidazole phosphoribosyltransferase (342 aa).

Glu311 serves as the catalytic Proton acceptor.

This sequence belongs to the CobT family.

It catalyses the reaction 5,6-dimethylbenzimidazole + nicotinate beta-D-ribonucleotide = alpha-ribazole 5'-phosphate + nicotinate + H(+). It functions in the pathway nucleoside biosynthesis; alpha-ribazole biosynthesis; alpha-ribazole from 5,6-dimethylbenzimidazole: step 1/2. Catalyzes the synthesis of alpha-ribazole-5'-phosphate from nicotinate mononucleotide (NAMN) and 5,6-dimethylbenzimidazole (DMB). This Shewanella loihica (strain ATCC BAA-1088 / PV-4) protein is Nicotinate-nucleotide--dimethylbenzimidazole phosphoribosyltransferase.